A 226-amino-acid chain; its full sequence is UPF0173 metal-dependent hydrolase Fnod_0635 (226 aa).

Belongs to the UPF0173 family.

The protein is UPF0173 metal-dependent hydrolase Fnod_0635 of Fervidobacterium nodosum (strain ATCC 35602 / DSM 5306 / Rt17-B1).